Here is a 102-residue protein sequence, read N- to C-terminus: Protein PDF (102 aa).

An N-terminal signal peptide occupies residues 1 to 24; the sequence is MARYTYLVALVLLAICCQWGYCGA. At Ala-100 the chain carries Alanine amide.

This sequence belongs to the arthropod PDH family. As to expression, predominantly expressed in adult head. Expressed at higher level in males than in females. In adult brain, it is specifically expressed in the ventral lateral neurons (LNvs) as well as in 2-4 tritocerebral cells and 4-6 abdominal cells.

It localises to the secreted. Functionally, neuropeptide PDF is the main transmitter regulating circadian locomotor rhythms. Required to maintain behavioral rhythms under constant conditions by coordinating pacemaker interactions in the circadian system. Together with CCHa1, involved in regulating intensity and periodicity of daytime activity, possibly by modulating rhythmic expression of circadian protein PER/period in a subset of clock neurons, but not TIM/timeless. Acts on small and large ventral lateral neurons to control sleep and regulates the state transition from sleep to wake. The sequence is that of Protein PDF (Pdf) from Drosophila melanogaster (Fruit fly).